The sequence spans 164 residues: CASP-like protein 1C1 (164 aa).

The Cytoplasmic portion of the chain corresponds to 1–15 (MGDVEIPPLVKQIVR). A helical membrane pass occupies residues 16-36 (GLRGLAFLATILATSFMAASH). Residues 37–56 (ERAIFPFDYKADYTDLMLFK) are Extracellular-facing. The helical transmembrane segment at 57-77 (AFLGANIAASLYSFFFVCLPP) threads the bilayer. The Cytoplasmic segment spans residues 78 to 83 (KSLLWR). A helical transmembrane segment spans residues 84–104 (LAIVLDVIMFGLLVAMDSAAI). At 105 to 132 (AAAYLHKHGDSQAFWPPICSQVPTYCYR) the chain is on the extracellular side. A helical transmembrane segment spans residues 133–153 (VILAISIGFGGVFMFLLIIII). At 154–164 (SISVILNPLLV) the chain is on the cytoplasmic side.

This sequence belongs to the Casparian strip membrane proteins (CASP) family. Homodimer and heterodimers.

It localises to the cell membrane. The polypeptide is CASP-like protein 1C1 (Populus trichocarpa (Western balsam poplar)).